Here is a 343-residue protein sequence, read N- to C-terminus: Major outer membrane protein (343 aa).

The signal sequence occupies residues 1–20 (MKKTIVALAVAAVAATSANA).

Disulfide bond interactions within and between MOMP molecules and other components form high molecular-weight oligomers.

It localises to the cell outer membrane. Functionally, structural rigidity of the outer membrane of elementary bodies and porin forming, permitting diffusion of solutes through the intracellular reticulate body membrane. The polypeptide is Major outer membrane protein (ompH) (Pasteurella multocida).